Reading from the N-terminus, the 205-residue chain is Potassium-transporting ATPase KdpC subunit (205 aa).

The chain crosses the membrane as a helical span at residues 9–29 (VFAVLFLFILGFVYPTVTSLI).

Belongs to the KdpC family. The system is composed of three essential subunits: KdpA, KdpB and KdpC.

It localises to the cell membrane. In terms of biological role, part of the high-affinity ATP-driven potassium transport (or Kdp) system, which catalyzes the hydrolysis of ATP coupled with the electrogenic transport of potassium into the cytoplasm. This subunit acts as a catalytic chaperone that increases the ATP-binding affinity of the ATP-hydrolyzing subunit KdpB by the formation of a transient KdpB/KdpC/ATP ternary complex. The polypeptide is Potassium-transporting ATPase KdpC subunit (Thermoplasma acidophilum (strain ATCC 25905 / DSM 1728 / JCM 9062 / NBRC 15155 / AMRC-C165)).